The primary structure comprises 320 residues: Eukaryotic translation initiation factor 3 subunit G (320 aa).

The segment at 1-25 (MPTGDFDSKPSWADQVEEEGEDDKC) is disordered. Residues S8 and S11 each carry the phosphoserine modification. Phosphothreonine occurs at positions 38 and 41. Residues S42, S189, S223, and S264 each carry the phosphoserine modification. A disordered region spans residues 209–234 (KTGKYVPPSLRDGASRRGESMQPNRR). A compositionally biased stretch (basic and acidic residues) spans 221–234 (GASRRGESMQPNRR). One can recognise an RRM domain in the interval 239–317 (ATIRVTNLSE…LILNVEWAKP (79 aa)).

This sequence belongs to the eIF-3 subunit G family. As to quaternary structure, component of the eukaryotic translation initiation factor 3 (eIF-3) complex, which is composed of 13 subunits: EIF3A, EIF3B, EIF3C, EIF3D, EIF3E, EIF3F, EIF3G, EIF3H, EIF3I, EIF3J, EIF3K, EIF3L and EIF3M. The eIF-3 complex appears to include 3 stable modules: module A is composed of EIF3A, EIF3B, EIF3G and EIF3I; module B is composed of EIF3F, EIF3H, and EIF3M; and module C is composed of EIF3C, EIF3D, EIF3E, EIF3K and EIF3L. EIF3C of module C binds EIF3B of module A and EIF3H of module B, thereby linking the three modules. EIF3J is a labile subunit that binds to the eIF-3 complex via EIF3B. The eIF-3 complex interacts with RPS6KB1 under conditions of nutrient depletion. Mitogenic stimulation leads to binding and activation of a complex composed of FRAP1 and RAPTOR, leading to phosphorylation and release of RPS6KB1 and binding of EIF4B to eIF-3. Interacts (via C-terminus) with AIFM1 (via N-terminus). Interacts with DHX33; the interaction is independent of RNA. In terms of processing, phosphorylated. Phosphorylation is enhanced upon serum stimulation.

It is found in the cytoplasm. Its subcellular location is the nucleus. The protein resides in the perinuclear region. Functionally, RNA-binding component of the eukaryotic translation initiation factor 3 (eIF-3) complex, which is required for several steps in the initiation of protein synthesis. The eIF-3 complex associates with the 40S ribosome and facilitates the recruitment of eIF-1, eIF-1A, eIF-2:GTP:methionyl-tRNAi and eIF-5 to form the 43S pre-initiation complex (43S PIC). The eIF-3 complex stimulates mRNA recruitment to the 43S PIC and scanning of the mRNA for AUG recognition. The eIF-3 complex is also required for disassembly and recycling of post-termination ribosomal complexes and subsequently prevents premature joining of the 40S and 60S ribosomal subunits prior to initiation. The eIF-3 complex specifically targets and initiates translation of a subset of mRNAs involved in cell proliferation, including cell cycling, differentiation and apoptosis, and uses different modes of RNA stem-loop binding to exert either translational activation or repression. This subunit can bind 18S rRNA. The polypeptide is Eukaryotic translation initiation factor 3 subunit G (Bos taurus (Bovine)).